The primary structure comprises 216 residues: Phosphoenolpyruvate guanylyltransferase (216 aa).

Phosphoenolpyruvate is bound by residues T139, G155, and S158.

This sequence belongs to the CofC family.

It carries out the reaction phosphoenolpyruvate + GTP + H(+) = enolpyruvoyl-2-diphospho-5'-guanosine + diphosphate. It participates in cofactor biosynthesis; coenzyme F420 biosynthesis. Its function is as follows. Guanylyltransferase that catalyzes the activation of phosphoenolpyruvate (PEP) as enolpyruvoyl-2-diphospho-5'-guanosine, via the condensation of PEP with GTP. It is involved in the biosynthesis of coenzyme F420, a hydride carrier cofactor. This Streptomyces avermitilis (strain ATCC 31267 / DSM 46492 / JCM 5070 / NBRC 14893 / NCIMB 12804 / NRRL 8165 / MA-4680) protein is Phosphoenolpyruvate guanylyltransferase.